The sequence spans 213 residues: Uridine kinase (213 aa).

15 to 22 lines the ATP pocket; sequence GASASGKS.

It belongs to the uridine kinase family.

Its subcellular location is the cytoplasm. The enzyme catalyses uridine + ATP = UMP + ADP + H(+). The catalysed reaction is cytidine + ATP = CMP + ADP + H(+). Its pathway is pyrimidine metabolism; CTP biosynthesis via salvage pathway; CTP from cytidine: step 1/3. It functions in the pathway pyrimidine metabolism; UMP biosynthesis via salvage pathway; UMP from uridine: step 1/1. The polypeptide is Uridine kinase (Erwinia tasmaniensis (strain DSM 17950 / CFBP 7177 / CIP 109463 / NCPPB 4357 / Et1/99)).